Reading from the N-terminus, the 453-residue chain is Cysteine--tRNA ligase (453 aa).

C31 lines the Zn(2+) pocket. A 'HIGH' region motif is present at residues P33–N43. Residues C213, H238, and E242 each coordinate Zn(2+). Residues K271 to S275 carry the 'KMSKS' region motif. K274 lines the ATP pocket.

Belongs to the class-I aminoacyl-tRNA synthetase family. In terms of assembly, monomer. Requires Zn(2+) as cofactor.

It is found in the cytoplasm. The enzyme catalyses tRNA(Cys) + L-cysteine + ATP = L-cysteinyl-tRNA(Cys) + AMP + diphosphate. This Pelagibacter ubique (strain HTCC1062) protein is Cysteine--tRNA ligase.